The primary structure comprises 136 residues: Nucleoside diphosphate kinase (136 aa).

6 residues coordinate ATP: K10, F58, R86, T92, R104, and N114. The active-site Pros-phosphohistidine intermediate is the H117.

Belongs to the NDK family. Homotetramer. It depends on Mg(2+) as a cofactor.

It localises to the cytoplasm. The catalysed reaction is a 2'-deoxyribonucleoside 5'-diphosphate + ATP = a 2'-deoxyribonucleoside 5'-triphosphate + ADP. It carries out the reaction a ribonucleoside 5'-diphosphate + ATP = a ribonucleoside 5'-triphosphate + ADP. Its function is as follows. Major role in the synthesis of nucleoside triphosphates other than ATP. The ATP gamma phosphate is transferred to the NDP beta phosphate via a ping-pong mechanism, using a phosphorylated active-site intermediate. The sequence is that of Nucleoside diphosphate kinase from Corynebacterium glutamicum (strain R).